We begin with the raw amino-acid sequence, 669 residues long: DNA mismatch repair protein MutL (669 aa).

A disordered region spans residues 343–408 (SAFHRAEPEE…RAPSDSSVRE (66 aa)). Residues 344–356 (AFHRAEPEERESQ) show a composition bias toward basic and acidic residues. Residues 357 to 372 (PETTPQYSPQSVSTTV) are compositionally biased toward polar residues. Positions 390 to 408 (TDYEIKPRDRAPSDSSVRE) are enriched in basic and acidic residues.

This sequence belongs to the DNA mismatch repair MutL/HexB family.

In terms of biological role, this protein is involved in the repair of mismatches in DNA. It is required for dam-dependent methyl-directed DNA mismatch repair. May act as a 'molecular matchmaker', a protein that promotes the formation of a stable complex between two or more DNA-binding proteins in an ATP-dependent manner without itself being part of a final effector complex. In Vibrio parahaemolyticus serotype O3:K6 (strain RIMD 2210633), this protein is DNA mismatch repair protein MutL.